The chain runs to 644 residues: Phosphomethylpyrimidine synthase (644 aa).

Substrate contacts are provided by residues Asn-236, Met-265, Tyr-294, His-330, 350-352 (SRG), 391-394 (DGLR), and Glu-430. A Zn(2+)-binding site is contributed by His-434. Residue Tyr-457 coordinates substrate. His-498 lines the Zn(2+) pocket. [4Fe-4S] cluster is bound by residues Cys-578, Cys-581, and Cys-586. Residues 623-644 (RQKSEEFKASGSELYHPAVEAE) form a disordered region.

This sequence belongs to the ThiC family. In terms of assembly, homodimer. It depends on [4Fe-4S] cluster as a cofactor.

The catalysed reaction is 5-amino-1-(5-phospho-beta-D-ribosyl)imidazole + S-adenosyl-L-methionine = 4-amino-2-methyl-5-(phosphooxymethyl)pyrimidine + CO + 5'-deoxyadenosine + formate + L-methionine + 3 H(+). It participates in cofactor biosynthesis; thiamine diphosphate biosynthesis. Catalyzes the synthesis of the hydroxymethylpyrimidine phosphate (HMP-P) moiety of thiamine from aminoimidazole ribotide (AIR) in a radical S-adenosyl-L-methionine (SAM)-dependent reaction. The sequence is that of Phosphomethylpyrimidine synthase from Aliivibrio fischeri (strain MJ11) (Vibrio fischeri).